The primary structure comprises 528 residues: Probable GTP-binding protein OBGM, mitochondrial (528 aa).

The N-terminal 45 residues, 1–45, are a transit peptide targeting the mitochondrion; that stretch reads MWRRQHALLRRISLPKPPAATGIGCYYATEPEGRKPKTAPLQSRG. The Obg domain occupies 46–339; that stretch reads MVDRFRLRAK…TYLILELKSI (294 aa). Disordered regions lie at residues 52–87 and 167–212; these read LRAK…RGGD and HSPF…NHRG. The segment covering 77–86 has biased composition (gly residues); it reads PDGGNGGRGG. Positions 197–207 are enriched in basic and acidic residues; it reads NTAENDCERGN. In terms of domain architecture, OBG-type G spans 340–513; it reads ADVGLVGMPN…LRVGLRDLMD (174 aa). GTP is bound by residues 346–353 and 393–397; these read GMPNAGKS and DIPGL.

This sequence belongs to the TRAFAC class OBG-HflX-like GTPase superfamily. OBG GTPase family.

It localises to the mitochondrion. Functionally, may bind GTP and have GTPase activity. The chain is Probable GTP-binding protein OBGM, mitochondrial (OBGM) from Oryza sativa subsp. japonica (Rice).